The following is a 384-amino-acid chain: MTNPIIAFQNVSKVFEDSGTQVLKDINFELEEGKFYTLLGASGSGKSTILNIIAGLLDATSGDVLLDGKRINDIPINKRDVHTVFQSYALFPHMNVFDNVAFALKLKKVPKKEIEERVKEALKMVQLDGYQKRSIQKLSGGQRQRVAIARAIINQPRVVLLDEPLSALDLKLRTEMQYELRELQKRLGITFVFVTHDQEEALAMSDWIFVMNDGEIVQSGTPVDIYDEPINHFVATFIGESNILPGVMIEDYLVEFNGKRFESVDGGMRPNEPVEVVIRPEDLQITLPEEGKLQVRVETQLFRGVHYEIIAYDNLGNEWMIHSTRKAIEGEIIGLDFTPEDIHIMRLNETEEEFDARIEEYVEMEEPEDGLINAIEEERHEENS.

The ABC transporter domain maps to 6–238; it reads IAFQNVSKVF…PINHFVATFI (233 aa). Position 40-47 (40-47) interacts with ATP; sequence GASGSGKS.

It belongs to the ABC transporter superfamily. Spermidine/putrescine importer (TC 3.A.1.11.1) family. In terms of assembly, the complex is composed of two ATP-binding proteins (PotA), two transmembrane proteins (PotB and PotC) and a solute-binding protein (PotD).

The protein localises to the cell membrane. The catalysed reaction is ATP + H2O + polyamine-[polyamine-binding protein]Side 1 = ADP + phosphate + polyamineSide 2 + [polyamine-binding protein]Side 1.. Functionally, part of the ABC transporter complex PotABCD involved in spermidine/putrescine import. Responsible for energy coupling to the transport system. The protein is Spermidine/putrescine import ATP-binding protein PotA of Streptococcus thermophilus (strain ATCC BAA-491 / LMD-9).